Reading from the N-terminus, the 347-residue chain is MGLEEELLRIAKKLEKMVSRKKTEGALDLLKKLNSCQMSIQLLQTTRIGVAVNGVRKHCSDKEVVSLAKVLIKNWKRLLDSPRTTKGEREEREKAKKEKGLGCSDWKPEAGLSPPRKKGGGEPKTRRDSVDSRSSTTSSPKRPSLERSNSSKSKVETPTTPSSPSTPTFAPAVCLLAPCYLTGDSVRDKCVEMLSAALKAEDNFKDYGVNCDKLASEIEDHIYQELKSTDMKYRNRVRSRISNLKDPRNPGLRRNVLSGAISPELIAKMTAEEMASDELRELRNAMTQEAIREHQMAKTGGTTTDLLRCSKCKKKNCTYNQVQTRSADEPMTTFVLCNECGNRWKFC.

The TFIIS N-terminal domain occupies 5-82 (EELLRIAKKL…KNWKRLLDSP (78 aa)). The span at 83-100 (RTTKGEREEREKAKKEKG) shows a compositional bias: basic and acidic residues. Residues 83-168 (RTTKGEREER…TTPSSPSTPT (86 aa)) form a disordered region. The residue at position 113 (serine 113) is a Phosphoserine. The segment covering 119-131 (GGGEPKTRRDSVD) has biased composition (basic and acidic residues). 2 stretches are compositionally biased toward low complexity: residues 132–142 (SRSSTTSSPKR) and 157–168 (TPTTPSSPSTPT). Residue serine 139 is modified to Phosphoserine. A TFIIS central domain is found at 186-302 (VRDKCVEMLS…EHQMAKTGGT (117 aa)). The TFIIS-type zinc finger occupies 305–345 (DLLRCSKCKKKNCTYNQVQTRSADEPMTTFVLCNECGNRWK). Zn(2+)-binding residues include cysteine 309, cysteine 312, cysteine 337, and cysteine 340.

This sequence belongs to the TFS-II family. In terms of tissue distribution, liver, kidney and heart.

Its subcellular location is the nucleus. Functionally, necessary for efficient RNA polymerase II transcription elongation past template-encoded arresting sites. The arresting sites in DNA have the property of trapping a certain fraction of elongating RNA polymerases that pass through, resulting in locked ternary complexes. Cleavage of the nascent transcript by S-II allows the resumption of elongation from the new 3'-terminus. The sequence is that of Transcription elongation factor A protein 3 (Tcea3) from Mus musculus (Mouse).